The following is a 248-amino-acid chain: MHLYALSEKLEFPDPQTASSEGLLAIGGDLSVARLVTAYANGIFPWYDDDTPILWWSPDPRCVLYPSQLHVPASLRRRINSGQFEVTLDTAFEAVIHACADAARPGQSGTWIVDEMIDAYMNLHEAGVAHSVEVWSRGAGDGRVLAGGLYGVALGGVFYGESMFYRRTDASKVAVVWLVRLLEFWGYRVVDCQQTTTHMLRFGAQEVSRACFLEELDRALRMPLRAGRWQIPDGFRPLRRATLPDENQ.

This sequence belongs to the L/F-transferase family.

The protein resides in the cytoplasm. It catalyses the reaction N-terminal L-lysyl-[protein] + L-leucyl-tRNA(Leu) = N-terminal L-leucyl-L-lysyl-[protein] + tRNA(Leu) + H(+). The catalysed reaction is N-terminal L-arginyl-[protein] + L-leucyl-tRNA(Leu) = N-terminal L-leucyl-L-arginyl-[protein] + tRNA(Leu) + H(+). The enzyme catalyses L-phenylalanyl-tRNA(Phe) + an N-terminal L-alpha-aminoacyl-[protein] = an N-terminal L-phenylalanyl-L-alpha-aminoacyl-[protein] + tRNA(Phe). Functions in the N-end rule pathway of protein degradation where it conjugates Leu, Phe and, less efficiently, Met from aminoacyl-tRNAs to the N-termini of proteins containing an N-terminal arginine or lysine. The chain is Leucyl/phenylalanyl-tRNA--protein transferase from Oleidesulfovibrio alaskensis (strain ATCC BAA-1058 / DSM 17464 / G20) (Desulfovibrio alaskensis).